The chain runs to 327 residues: DNA primase large subunit PriL (327 aa).

[4Fe-4S] cluster contacts are provided by Cys-218, Cys-290, Cys-299, and Cys-307.

Belongs to the eukaryotic-type primase large subunit family. As to quaternary structure, heterodimer of a small subunit (PriS) and a large subunit (PriL). [4Fe-4S] cluster is required as a cofactor.

Its function is as follows. Regulatory subunit of DNA primase, an RNA polymerase that catalyzes the synthesis of short RNA molecules used as primers for DNA polymerase during DNA replication. Stabilizes and modulates the activity of the small subunit, increasing the rate of DNA synthesis, and conferring RNA synthesis capability. The DNA polymerase activity may enable DNA primase to also catalyze primer extension after primer synthesis. May also play a role in DNA repair. The polypeptide is DNA primase large subunit PriL (Thermoplasma volcanium (strain ATCC 51530 / DSM 4299 / JCM 9571 / NBRC 15438 / GSS1)).